The sequence spans 437 residues: Protein translocase subunit SecY (437 aa).

10 consecutive transmembrane segments (helical) span residues 19 to 39 (LFTL…IPGV), 69 to 89 (LLQI…SIIL), 122 to 142 (VALA…GALF), 157 to 177 (IFTT…VMWL), 189 to 209 (GMSI…LWSI), 219 to 239 (WIEF…VVFV), 275 to 295 (GIIP…VVQF), 318 to 338 (HITV…AISF), 378 to 398 (GSLY…PLGA), and 400 to 420 (QNFP…LETV).

The protein belongs to the SecY/SEC61-alpha family. In terms of assembly, component of the Sec protein translocase complex. Heterotrimer consisting of SecY, SecE and SecG subunits. The heterotrimers can form oligomers, although 1 heterotrimer is thought to be able to translocate proteins. Interacts with the ribosome. Interacts with SecDF, and other proteins may be involved. Interacts with SecA.

The protein resides in the cell membrane. Functionally, the central subunit of the protein translocation channel SecYEG. Consists of two halves formed by TMs 1-5 and 6-10. These two domains form a lateral gate at the front which open onto the bilayer between TMs 2 and 7, and are clamped together by SecE at the back. The channel is closed by both a pore ring composed of hydrophobic SecY resides and a short helix (helix 2A) on the extracellular side of the membrane which forms a plug. The plug probably moves laterally to allow the channel to open. The ring and the pore may move independently. The protein is Protein translocase subunit SecY of Streptomyces scabiei.